We begin with the raw amino-acid sequence, 390 residues long: GTPase Obg/CgtA (390 aa).

Residues 1-159 (MKFVDEAVIK…RDIRLELLLL (159 aa)) enclose the Obg domain. An OBG-type G domain is found at 160 to 333 (ADVGMLGMPN…LCMKLAEFMD (174 aa)). GTP-binding positions include 166-173 (GMPNAGKS), 191-195 (FTTLV), 213-216 (DIPG), 283-286 (NKVD), and 314-316 (SAA). Residues S173 and T193 each coordinate Mg(2+).

It belongs to the TRAFAC class OBG-HflX-like GTPase superfamily. OBG GTPase family. In terms of assembly, monomer. Interacts with SpoT (AC Q9KNM2) in a yeast 2-hybrid assay. Mg(2+) serves as cofactor.

Its subcellular location is the cytoplasm. Its function is as follows. Depletion experiments lead to gene down regulation and a dramatic increase in ppGpp levels, like those seen in the stringent response. There is no change in cell morphology in depletion experiments, but cells are very sensitive to the DNA-damaging agent hydroxyurea and are very elongated. Overexpression reduces growth and leads to elongated cells. Overexpression of proteins with C-terminal deletions of 29 or 62 amino acids showed fewer elongated cells. Functionally, an essential GTPase which binds GTP, GDP and possibly (p)ppGpp with moderate affinity, with high nucleotide exchange rates and a fairly low GTP hydrolysis rate. It may play a role in control of the cell cycle, stress response, ribosome biogenesis and in those bacteria that undergo differentiation, in morphogenesis control. GTPase activity is stimulated by 50S ribosomal subunits. This chain is GTPase Obg/CgtA, found in Vibrio cholerae serotype O1 (strain ATCC 39315 / El Tor Inaba N16961).